Reading from the N-terminus, the 31-residue chain is Cytochrome b6-f complex subunit 6 (31 aa).

The helical transmembrane segment at 4-24 (ITSYFGFLLVALTITSALFIG) threads the bilayer.

Belongs to the PetL family. In terms of assembly, the 4 large subunits of the cytochrome b6-f complex are cytochrome b6, subunit IV (17 kDa polypeptide, PetD), cytochrome f and the Rieske protein, while the 4 small subunits are PetG, PetL, PetM and PetN. The complex functions as a dimer.

It localises to the plastid. The protein resides in the chloroplast thylakoid membrane. Its function is as follows. Component of the cytochrome b6-f complex, which mediates electron transfer between photosystem II (PSII) and photosystem I (PSI), cyclic electron flow around PSI, and state transitions. PetL is important for photoautotrophic growth as well as for electron transfer efficiency and stability of the cytochrome b6-f complex. The protein is Cytochrome b6-f complex subunit 6 of Panax ginseng (Korean ginseng).